The sequence spans 367 residues: tRNA pseudouridine synthase D (367 aa).

D78 acts as the Nucleophile in catalysis. The TRUD domain occupies 153-300 (GVPNYFGEQR…KQERRRIRLT (148 aa)).

The protein belongs to the pseudouridine synthase TruD family.

The enzyme catalyses uridine(13) in tRNA = pseudouridine(13) in tRNA. In terms of biological role, responsible for synthesis of pseudouridine from uracil-13 in transfer RNAs. This chain is tRNA pseudouridine synthase D, found in Colwellia psychrerythraea (strain 34H / ATCC BAA-681) (Vibrio psychroerythus).